The sequence spans 1902 residues: Putative surface cell antigen sca1 (1902 aa).

An N-terminal signal peptide occupies residues 1–28 (MNKLTEQHLLKKSRFLKYSLLASISVGA). Disordered regions lie at residues 140 to 273 (GIEK…TFVP), 420 to 485 (QGVF…SRTA), 707 to 729 (TTTT…YSSS), 858 to 885 (NRRR…AWGN), and 1470 to 1548 (KSES…SDGD). Composition is skewed to polar residues over residues 146–159 (QSQN…TEQM) and 168–197 (TASS…SPEH). The span at 199 to 212 (TTAPGTPSSTPATP) shows a compositional bias: low complexity. A compositionally biased stretch (polar residues) spans 225–238 (LGANTPPNINTNSK). The segment covering 246 to 264 (SSSGPQQQAVQSSSQVKSE) has biased composition (low complexity). Residues 423-439 (FNKNKSSGGNARKSSAG) are compositionally biased toward polar residues. A compositionally biased stretch (basic and acidic residues) spans 445–482 (KKQEAQKQLSEIKKQEKAIKTASDKAKEVAASAKKETS). The segment covering 863-874 (RDGETSKQRTVD) has biased composition (basic and acidic residues). The segment covering 1491 to 1507 (LSSLPALASSNESALAL) has biased composition (low complexity). The span at 1521–1538 (SSEDEESYDSGFEEEEET) shows a compositional bias: acidic residues. The Autotransporter domain occupies 1618–1902 (ESHIKRGLWM…QGSVKLKVNL (285 aa)).

The protein resides in the cell outer membrane. In Rickettsia conorii (strain ATCC VR-613 / Malish 7), this protein is Putative surface cell antigen sca1 (sca1).